A 184-amino-acid polypeptide reads, in one-letter code: NADH-quinone oxidoreductase subunit J (184 aa).

A helical membrane pass occupies residues 1–21 (MEFAFYICGLIAILATLRVIT). The Cytoplasmic segment spans residues 22–27 (HTNPVH). Residues 28 to 48 (ALLYLIISLLAISGVFFSLGA) form a helical membrane-spanning segment. Residues 49-53 (YFAGA) are Periplasmic-facing. A helical transmembrane segment spans residues 54–74 (LEIIVYAGAIMVLFVFVVMML). Residues 75-91 (NLGGSEIEQERQWLKPQ) lie on the Cytoplasmic side of the membrane. A helical transmembrane segment spans residues 92 to 112 (VWIGPAILSAIMLVVIVYAIL). Topologically, residues 113–137 (GVNDQGIDGTPISAKAVGITLFGPY) are periplasmic. A helical transmembrane segment spans residues 138 to 158 (VLAVELASMLLLAGLVVAFHV). Residues 159-184 (GREERAGEVLSNRKDDSAKRKTEEHA) lie on the Cytoplasmic side of the membrane.

It belongs to the complex I subunit 6 family. In terms of assembly, composed of 13 different subunits. Subunits NuoA, H, J, K, L, M, N constitute the membrane sector of the complex.

Its subcellular location is the cell inner membrane. The enzyme catalyses a quinone + NADH + 5 H(+)(in) = a quinol + NAD(+) + 4 H(+)(out). Its function is as follows. NDH-1 shuttles electrons from NADH, via FMN and iron-sulfur (Fe-S) centers, to quinones in the respiratory chain. The immediate electron acceptor for the enzyme in this species is believed to be ubiquinone. Couples the redox reaction to proton translocation (for every two electrons transferred, four hydrogen ions are translocated across the cytoplasmic membrane), and thus conserves the redox energy in a proton gradient. The protein is NADH-quinone oxidoreductase subunit J (nuoJ) of Escherichia coli O157:H7.